A 485-amino-acid polypeptide reads, in one-letter code: Shutoff alkaline exonuclease (485 aa).

Belongs to the herpesviridae alkaline nuclease family. As to quaternary structure, forms a complex with the DNA polymerase, the DNA polymerase processivity factor, and the major DNA binding protein.

It is found in the host nucleus. It localises to the host cytoplasm. Functionally, plays a role in processing non linear or branched viral DNA intermediates in order to promote the production of mature packaged unit-length linear progeny viral DNA molecules. Exhibits endonuclease and exonuclease activities and accepts both double-stranded and single-stranded DNA as substrate. Exonuclease digestion of DNA is in the 5'-&gt; 3' direction and the products are 5'-monophosphate nucleosides. Additionally, forms a recombinase with the major DNA-binding protein, which displays strand exchange activity. Also acts as a cytoplasmic RNA endonuclease that induces degradation of the majority of the cellular messenger RNAs during early lytic infection. The resulting inhibition of cellular protein synthesis serves to ensure maximal viral gene expression and evasion from host immune response. Internally cleaves host mRNAs which are then degraded by the cellular exonuclease XRN1. Bypasses therefore the regulatory steps of deadenylation and decapping normally required for XRN1 activation. The sequence is that of Shutoff alkaline exonuclease (37) from Alcelaphine herpesvirus 1 (strain C500) (AlHV-1).